The following is a 224-amino-acid chain: UPF0758 protein BLi02933/BL00636 (224 aa).

The region spanning 102–224 is the MPN domain; it reads VIRFPEDAAN…FVSLKEKGYL (123 aa). Zn(2+)-binding residues include H173, H175, and D186. The short motif at 173–186 is the JAMM motif element; that stretch reads HNHPSGDPAPSRED.

Belongs to the UPF0758 family.

The chain is UPF0758 protein BLi02933/BL00636 from Bacillus licheniformis (strain ATCC 14580 / DSM 13 / JCM 2505 / CCUG 7422 / NBRC 12200 / NCIMB 9375 / NCTC 10341 / NRRL NRS-1264 / Gibson 46).